The sequence spans 523 residues: MNSSTSAGVYANGNDNKKFKGDRPPCSPSRVLHLRKIPCDVTEAEVISLGLPFGKVTNLLMLKGKSQAFLEMASEEAAVTMINYYTPVTPHLRSQPVYIQYSNHRELKTDNLPNQARAQAALQAVSAVQSGNLSLPGATANEGTLLPGQSPVLRIIIENLFYPVTLEVLHQIFSKFGTVLKIITFTKNNQFQALLQYADPVNAQYAKMALDGQNIYNACCTLRIDFSKLTSLNVKYNNDKSRDFTRLDLPTGDGQPSLEPPMAAAFGAPGIMSSPYAGAAGFAPAIAFPQAAGLSVPAVPGALGPLTLTSSAVSGRMAIPGASGMPGNSVLLVTNLNPDFITPHGLFILFGVYGDVHRVKIMFNKKENALVQMADASQAQLAMNHLSGQRLYGKVLRATLSKHQAVQLPREGQEDQGLTKDFSNSPLHRFKKPGSKNFQNIFPPSATLHLSNIPPSVTMDDLKNLFTEAGCSVKAFKFFQKDRKMALIQLGSVEEAIQALIELHNHDLGENHHLRVSFSKSTI.

The disordered stretch occupies residues 1–25; it reads MNSSTSAGVYANGNDNKKFKGDRPP. RRM domains follow at residues 30-114, 153-229, and 329-403; these read RVLH…NLPN, LRII…FSKL, and SVLL…LSKH. A Glycyl lysine isopeptide (Lys-Gly) (interchain with G-Cter in SUMO2) cross-link involves residue K36. Y98 is subject to Phosphotyrosine. Phosphothreonine is present on T109. A Glycyl lysine isopeptide (Lys-Gly) (interchain with G-Cter in SUMO2) cross-link involves residue K187. N6-acetyllysine is present on K394. The segment at 406–426 is disordered; the sequence is VQLPREGQEDQGLTKDFSNSP. Residue S425 is modified to Phosphoserine. The 76-residue stretch at 446 to 521 folds into the RRM 4 domain; it reads ATLHLSNIPP…HHLRVSFSKS (76 aa).

In terms of assembly, interacts with THBS4 (via the acidic amphipathic C-terminus).

RNA-binding protein that mediates pre-mRNA alternative splicing regulation. Plays a role in the regulation of cell proliferation, differentiation and migration. Positive regulator of EPO-dependent erythropoiesis. Participates in cell differentiation regulation by repressing tissue-specific exons. Promotes Fas exon 6 skipping. Binds RNA, preferentially to both poly(G) and poly(U). This Mus musculus (Mouse) protein is Polypyrimidine tract-binding protein 3 (Ptbp3).